Consider the following 427-residue polypeptide: Enolase (427 aa).

Q163 is a binding site for (2R)-2-phosphoglycerate. The active-site Proton donor is the E205. D242, E285, and D312 together coordinate Mg(2+). (2R)-2-phosphoglycerate is bound by residues K337, R366, S367, and K388. The active-site Proton acceptor is K337.

Belongs to the enolase family. It depends on Mg(2+) as a cofactor.

The protein localises to the cytoplasm. It is found in the secreted. The protein resides in the cell surface. It carries out the reaction (2R)-2-phosphoglycerate = phosphoenolpyruvate + H2O. It functions in the pathway carbohydrate degradation; glycolysis; pyruvate from D-glyceraldehyde 3-phosphate: step 4/5. Its function is as follows. Catalyzes the reversible conversion of 2-phosphoglycerate (2-PG) into phosphoenolpyruvate (PEP). It is essential for the degradation of carbohydrates via glycolysis. The chain is Enolase from Thiobacillus denitrificans (strain ATCC 25259 / T1).